The chain runs to 319 residues: Ribose-phosphate pyrophosphokinase (319 aa).

Residues 41–43 (DGE) and 100–101 (RQ) each bind ATP. Positions 134 and 176 each coordinate Mg(2+). Lys-199 is a catalytic residue. D-ribose 5-phosphate is bound by residues Arg-201, Asp-225, and 229–233 (DTAGT).

It belongs to the ribose-phosphate pyrophosphokinase family. Class I subfamily. In terms of assembly, homohexamer. It depends on Mg(2+) as a cofactor.

The protein localises to the cytoplasm. The catalysed reaction is D-ribose 5-phosphate + ATP = 5-phospho-alpha-D-ribose 1-diphosphate + AMP + H(+). It participates in metabolic intermediate biosynthesis; 5-phospho-alpha-D-ribose 1-diphosphate biosynthesis; 5-phospho-alpha-D-ribose 1-diphosphate from D-ribose 5-phosphate (route I): step 1/1. Involved in the biosynthesis of the central metabolite phospho-alpha-D-ribosyl-1-pyrophosphate (PRPP) via the transfer of pyrophosphoryl group from ATP to 1-hydroxyl of ribose-5-phosphate (Rib-5-P). In Clostridium perfringens (strain 13 / Type A), this protein is Ribose-phosphate pyrophosphokinase.